We begin with the raw amino-acid sequence, 242 residues long: MLHLEDDNGRQRSVIANLQKFVYCCLYLRFIKDGSLFLILLGWIISSLCDFIQELTLRYLKKNYLEVGRDNDQEDDESLAIRGLETPIVRMIINKAIRYYQGLILLETAYCIVYHIRLDVSRDICSKPYGFVIMLLIREFTCPVPTAFPSKLLLVLLDILLLFCQIVIINGSLSSSLQNVKLIVKELNAEEEGALNILKLNTWHMDATGPELIVLKNHDKSIPQQADGDDATEITPLLNIAE.

2 helical membrane-spanning segments follow: residues 128-148 (PYGF…PTAF) and 152-172 (LLLV…INGS).

Part of the vacuole-localized DSC E3 ligase complex composed of at least TUL1, DSC2, DSC3, UBX3, CDC48 and VLD1.

The protein resides in the vacuole membrane. In terms of biological role, component of the vacuole-localized DSC E3 ubiquitin ligase complex involved in the targeting of the complex to the vacuole membrane via the AP3 pathway to ubiquinate vacuolar membrane proteins. Competes with GLD1 to determine the subcellular localizations of the DSC complex. This chain is Vacuole localized DSC protein 1, found in Saccharomyces cerevisiae (strain ATCC 204508 / S288c) (Baker's yeast).